Reading from the N-terminus, the 688-residue chain is Glycine--tRNA ligase beta subunit (688 aa).

It belongs to the class-II aminoacyl-tRNA synthetase family. As to quaternary structure, tetramer of two alpha and two beta subunits.

It is found in the cytoplasm. The enzyme catalyses tRNA(Gly) + glycine + ATP = glycyl-tRNA(Gly) + AMP + diphosphate. This chain is Glycine--tRNA ligase beta subunit, found in Psychromonas ingrahamii (strain DSM 17664 / CCUG 51855 / 37).